The chain runs to 43 residues: Jararafibrase-3 (43 aa).

The region spanning 10-43 (MNGLYYKIFDELKAWKDAEMFCRKYKPGWHLASF) is the C-type lectin domain.

The protein belongs to the true venom lectin family. Monomer. As to expression, expressed by the venom gland.

Its subcellular location is the secreted. Its activity is regulated as follows. Inhibited by 1,10-phenanthroline and EDTA. May have both metalloproteinase and lectin activities. Induces local hemorrhage in the skin of rats. Degrades type-IV collagen, gelatin, laminin and fibronectin. Has hemagglutinating activity on red blood cells. The protein is Jararafibrase-3 of Bothrops jararaca (Jararaca).